We begin with the raw amino-acid sequence, 407 residues long: Zinc finger protein 174 (407 aa).

Residues Met-1–Glu-20 are disordered. Lys-26 participates in a covalent cross-link: Glycyl lysine isopeptide (Lys-Gly) (interchain with G-Cter in SUMO2). The SCAN box domain maps to Gly-59 to Phe-124. The segment at Gly-150 to Gln-270 is disordered. Residue Lys-204 forms a Glycyl lysine isopeptide (Lys-Gly) (interchain with G-Cter in SUMO2) linkage. Basic and acidic residues predominate over residues Pro-211–Pro-221. Glycyl lysine isopeptide (Lys-Gly) (interchain with G-Cter in SUMO2) cross-links involve residues Lys-230 and Lys-271. C2H2-type zinc fingers lie at residues Tyr-326–His-348, Tyr-354–His-376, and Tyr-382–His-405.

Belongs to the krueppel C2H2-type zinc-finger protein family. Homodimer. In terms of tissue distribution, expressed in a variety of organs, but most strongly in adult testis and ovary followed by small intestine, colon, prostate, thymus, spleen, pancreas, skeletal muscle, heart, brain and kidney. Also expressed in umbilical vein endothelial cells, foreskin fibroblast and Hep-G2 cells.

The protein resides in the nucleus. In terms of biological role, transcriptional repressor. The sequence is that of Zinc finger protein 174 (ZNF174) from Homo sapiens (Human).